The primary structure comprises 542 residues: Membrane protein insertase YidC (542 aa).

5 helical membrane-spanning segments follow: residues 7–27, 338–358, 417–437, 455–475, and 494–514; these read LLVM…QQDF, FALL…IIGV, MGGC…YWTF, LSAQ…MFLL, and FMPV…VLYW.

Belongs to the OXA1/ALB3/YidC family. Type 1 subfamily. In terms of assembly, interacts with the Sec translocase complex via SecD. Specifically interacts with transmembrane segments of nascent integral membrane proteins during membrane integration.

It is found in the cell inner membrane. Functionally, required for the insertion and/or proper folding and/or complex formation of integral membrane proteins into the membrane. Involved in integration of membrane proteins that insert both dependently and independently of the Sec translocase complex, as well as at least some lipoproteins. Aids folding of multispanning membrane proteins. The chain is Membrane protein insertase YidC from Actinobacillus pleuropneumoniae serotype 3 (strain JL03).